The chain runs to 856 residues: DNA mismatch repair protein MutS (856 aa).

ATP is bound at residue 607–614 (GPNMSGKS).

The protein belongs to the DNA mismatch repair MutS family.

Its function is as follows. This protein is involved in the repair of mismatches in DNA. It is possible that it carries out the mismatch recognition step. This protein has a weak ATPase activity. The sequence is that of DNA mismatch repair protein MutS from Lactobacillus delbrueckii subsp. bulgaricus (strain ATCC 11842 / DSM 20081 / BCRC 10696 / JCM 1002 / NBRC 13953 / NCIMB 11778 / NCTC 12712 / WDCM 00102 / Lb 14).